A 261-amino-acid polypeptide reads, in one-letter code: tRNA (guanine-N(7)-)-methyltransferase (261 aa).

S-adenosyl-L-methionine-binding residues include E75, E100, D127, and D150. Residue D150 is part of the active site. Residue K154 participates in substrate binding. The interval 156–161 is interaction with RNA; the sequence is RHNKRR. Substrate-binding positions include D186 and 223-226; that span reads THFE.

The protein belongs to the class I-like SAM-binding methyltransferase superfamily. TrmB family.

The enzyme catalyses guanosine(46) in tRNA + S-adenosyl-L-methionine = N(7)-methylguanosine(46) in tRNA + S-adenosyl-L-homocysteine. The protein operates within tRNA modification; N(7)-methylguanine-tRNA biosynthesis. Functionally, catalyzes the formation of N(7)-methylguanine at position 46 (m7G46) in tRNA. This chain is tRNA (guanine-N(7)-)-methyltransferase, found in Xanthomonas campestris pv. campestris (strain 8004).